The chain runs to 88 residues: RQC P-site tRNA stabilizing factor (88 aa).

Residues 1-60 (MRLDKYLKVSRIIKRRTVAKEVADKGRIKVNGILAKSSTDLKVNDQVEIRFGNKLLLVKV) enclose the S4 RNA-binding domain.

The protein belongs to the RqcP family. Associates with stalled 50S ribosomal subunits. Binds to RqcH, 23S rRNA and the P-site tRNA. Does not require RqcH for association with 50S subunits.

Key component of the ribosome quality control system (RQC), a ribosome-associated complex that mediates the extraction of incompletely synthesized nascent chains from stalled ribosomes and their subsequent degradation. RqcH recruits Ala-charged tRNA, and with RqcP directs the elongation of stalled nascent chains on 50S ribosomal subunits, leading to non-templated C-terminal alanine extensions (Ala tail). The Ala tail promotes nascent chain degradation. RqcP is associated with the translocation-like movement of the peptidyl-tRNA from the A-site into the P-site. The polypeptide is RQC P-site tRNA stabilizing factor (Streptococcus pneumoniae (strain ATCC BAA-255 / R6)).